A 1138-amino-acid polypeptide reads, in one-letter code: MATGGDAEEEQVVPNEEDEADVRAVQARYLRSPSPSQYSVVSEAETESIFMEPIHLSSAVAAKQIINEELKPRGLRTDTECPGMLESAEQLLVEDLYNRVREKMDDRSLFNTPCVLDLQRALTQDRQEAPRNEVDEVWPNVFIAEKSVAVNKGRLKRLGITHILNAAHGTGVYTGSEFYTGLEIQYLGVEVDDFPEVDISQHFRKAAEFLDEALLTYRGKVLVSSEMGISRSAVLVVAYLMIFHSMAILEALMTVRRKRAIYPNDGFLKQLRELNEKLMEEREEEDGEEESEEDAGSMLGARVNSLMVEEEDDATSHLSGSSLGKASQVSKPVTLIDDEEEEKKLYEEWRKGQGFPKGEAAQGRKGRSCSMSSAQDGDDCEDEDVERIIQEWQSRNERYQAKGREQWNREEEEEEENSYSSRRRRHTLSESSASESVSSHDIRILKQQLERSTQSRRGRYRSDSESSESTWDMWNERLVEIEKEAARKYRSKSKREELDGDCSEAGGRVREDDEESVLSEASSFYNFCSRNKDKLTPLERWKIKRIQFGFHKKDSEAGDGGSEHGTEEAAAGEKNLSDVNLTAYQAWKLKHQKKVGSENKEEVVEMSKGEDTVLAKKRQRRLELLERSRQTLEESQSMGSWEADSSTASRSIPLSAFSSAAPSVSADGDTASVLSTQSHRSHASNMPATPLPNLPVGPGDTISIASIQNWIANVVNETLAQKQNEMLLLSRPPSVASMKAAPAACGLGGDDQLSVLSTSLSGCLPPPSQGRPSSDVQSVLSSTSSLTSRAEGSGNKVRGTSKPIYSLFADNVDLKELGRKEKEMQMELQEKMSEYKMEKLASDNKRSSLFKKKKAKDDEDMSVGDRDEDTDSAIGSFRYSSRSNSQKPETDASSSLAISDHYRNGRSMGNEMDSNINTWLSGLRMEEKSPPQSDWSGSSRGRYTRSSLLRETESKSCSYKFSKSRSQEQDTSFHEANGDTVRNTSRFSSSTTKEAREMHKFSRSTFSETSSSREESPEPYFFRRTPEPSDGEESPEPRRPNWTRPRDWEDVEESSKSDFAEFGAKRKFTQSFMRSEEEGEKERTENREEGRFASGRQSQYRRSTNQQEEEEMDDEAIIAAWRKRQEETRTKLQRRRED.

The tract at residues 1 to 20 (MATGGDAEEEQVVPNEEDEA) is disordered. The Tyrosine-protein phosphatase domain occupies 132-280 (NEVDEVWPNV…LRELNEKLME (149 aa)). The residue at position 291 (Ser291) is a Phosphoserine. 8 disordered regions span residues 309-336 (EEED…VTLI), 348-473 (EWRK…TWDM), 486-515 (ARKY…DDEE), 552-575 (KKDS…GEKN), 592-618 (QKKV…AKKR), 660-694 (AAPS…LPNL), 761-800 (SGCL…VRGT), and 850-1117 (FKKK…DEAI). Polar residues predominate over residues 316–331 (SHLSGSSLGKASQVSK). Position 373 is a phosphoserine (Ser373). Acidic residues predominate over residues 376 to 385 (DGDDCEDEDV). Residues 386–409 (ERIIQEWQSRNERYQAKGREQWNR) show a composition bias toward basic and acidic residues. Thr427 carries the phosphothreonine modification. Ser503 and Ser555 each carry phosphoserine. Composition is skewed to basic and acidic residues over residues 552-567 (KKDS…HGTE) and 595-614 (VGSE…DTVL). Residues 672 to 687 (SVLSTQSHRSHASNMP) show a composition bias toward polar residues. Positions 773–788 (SSDVQSVLSSTSSLTS) are enriched in low complexity. Residues 858 to 871 (DEDMSVGDRDEDTD) are compositionally biased toward acidic residues. Position 862 is a phosphoserine (Ser862). The span at 878-897 (RYSSRSNSQKPETDASSSLA) shows a compositional bias: polar residues. Phosphoserine is present on Ser929. Residues 936–947 (SGSSRGRYTRSS) show a composition bias toward low complexity. The span at 965–977 (RSQEQDTSFHEAN) shows a compositional bias: basic and acidic residues. Position 966 is a phosphoserine (Ser966). Residues 980–992 (TVRNTSRFSSSTT) show a composition bias toward polar residues. A Phosphoserine modification is found at Ser1016. 2 stretches are compositionally biased toward basic and acidic residues: residues 1035–1059 (PEPR…KSDF) and 1074–1091 (RSEE…EEGR). The span at 1095–1106 (GRQSQYRRSTNQ) shows a compositional bias: polar residues. Positions 1107–1116 (QEEEEMDDEA) are enriched in acidic residues.

This sequence belongs to the protein-tyrosine phosphatase family. Non-receptor class dual specificity subfamily.

The protein resides in the cytoplasm. It is found in the myofibril. The protein localises to the sarcomere. Its function is as follows. May be required for myofiber maturation. This is Serine/threonine/tyrosine-interacting-like protein 2 (Styxl2) from Mus musculus (Mouse).